Consider the following 757-residue polypeptide: Polyribonucleotide nucleotidyltransferase (757 aa).

Asp487 and Asp493 together coordinate Mg(2+). The KH domain maps to 554–613 (PRITTVRVKPDQIRLIIGPGGKTIKGIVDQTGVAIDVEDDGTVNVASADSDAVKRALDII). Residues 623–691 (GATYKGTVKR…REGKIRLSRR (69 aa)) enclose the S1 motif domain. The tract at residues 697 to 757 (PEGEEGDRAR…PPRERRERRS (61 aa)) is disordered. Basic and acidic residues-rich tracts occupy residues 702-711 (GDRARERMAQ) and 719-757 (PRRD…ERRS).

It belongs to the polyribonucleotide nucleotidyltransferase family. Requires Mg(2+) as cofactor.

It localises to the cytoplasm. The catalysed reaction is RNA(n+1) + phosphate = RNA(n) + a ribonucleoside 5'-diphosphate. Involved in mRNA degradation. Catalyzes the phosphorolysis of single-stranded polyribonucleotides processively in the 3'- to 5'-direction. This chain is Polyribonucleotide nucleotidyltransferase, found in Sorangium cellulosum (strain So ce56) (Polyangium cellulosum (strain So ce56)).